Here is a 519-residue protein sequence, read N- to C-terminus: ATP synthase subunit beta, mitochondrial (519 aa).

195-202 (GGAGVGKT) contacts ATP.

It belongs to the ATPase alpha/beta chains family. In terms of assembly, F-type ATPases have 2 components, CF(1) - the catalytic core - and CF(0) - the membrane proton channel. CF(1) has five subunits: alpha(3), beta(3), gamma(1), delta(1), epsilon(1). CF(0) has three main subunits: a, b and c.

It is found in the mitochondrion. It localises to the mitochondrion inner membrane. It carries out the reaction ATP + H2O + 4 H(+)(in) = ADP + phosphate + 5 H(+)(out). Mitochondrial membrane ATP synthase (F(1)F(0) ATP synthase or Complex V) produces ATP from ADP in the presence of a proton gradient across the membrane which is generated by electron transport complexes of the respiratory chain. F-type ATPases consist of two structural domains, F(1) - containing the extramembraneous catalytic core, and F(0) - containing the membrane proton channel, linked together by a central stalk and a peripheral stalk. During catalysis, ATP synthesis in the catalytic domain of F(1) is coupled via a rotary mechanism of the central stalk subunits to proton translocation. Subunits alpha and beta form the catalytic core in F(1). Rotation of the central stalk against the surrounding alpha(3)beta(3) subunits leads to hydrolysis of ATP in three separate catalytic sites on the beta subunits. The polypeptide is ATP synthase subunit beta, mitochondrial (atp-2) (Neurospora crassa (strain ATCC 24698 / 74-OR23-1A / CBS 708.71 / DSM 1257 / FGSC 987)).